Reading from the N-terminus, the 290-residue chain is MLKNVHQKARHHTRPVRAWLKLLWQRIDEDNMTTLAGNLAYVSLLSLVPLIAVVFALFAAFPMFSDVSLQLRHFIFANFIPATGDVIQRYIEQFVANSNKMTAVGACGLIVTALLLMYAIDSALNTIWRSKRTRPKVYSFAVYWMILTLGPLLAGASLAISSYLLSLRWASELNTVIDNVLRVFPLILSWISFWLLYSIVPTTRVPNRDAVVGAFVAAVLFEAGKKGFALYITMFPSYQLIYGVLAVIPILFVWVYWTWCIVLLGAEITVTLGEYRKLKQAAEQEEADQS.

The next 6 helical transmembrane spans lie at 44–64 (LLSL…FPMF), 104–124 (VGAC…DSAL), 140–160 (FAVY…SLAI), 183–203 (VFPL…VPTT), 210–230 (AVVG…GFAL), and 244–264 (VLAV…IVLL).

It belongs to the UPF0761 family.

It is found in the cell inner membrane. This Citrobacter koseri (strain ATCC BAA-895 / CDC 4225-83 / SGSC4696) protein is UPF0761 membrane protein CKO_03126.